The primary structure comprises 227 residues: MHSSVITFPGSNCDRDMDVALKKFGFKNKMVWHDDVELPKSDLVVLPGGFSYGDYLRCGSMASKSKIMKSVLNFAQGGGKVMGVCNGFQILVESGLLPGVLLRNKYLEFICKNVFVKANNKDNSYFKDDKKNIYEFHIAHNEGNYFCSNDQIKEINDNNQIALFYSDENGNVNEQSNPNGSLQNIAGVFNKQKNVLGMMPHPERMIDPALSGEDGSIFFQNLINNLK.

The Glutamine amidotransferase type-1 domain maps to 3–227 (SSVITFPGSN…FFQNLINNLK (225 aa)). C85 acts as the Nucleophile in catalysis. Active-site residues include H201 and E203.

In terms of assembly, part of the FGAM synthase complex composed of 1 PurL, 1 PurQ and 2 PurS subunits.

It localises to the cytoplasm. It catalyses the reaction N(2)-formyl-N(1)-(5-phospho-beta-D-ribosyl)glycinamide + L-glutamine + ATP + H2O = 2-formamido-N(1)-(5-O-phospho-beta-D-ribosyl)acetamidine + L-glutamate + ADP + phosphate + H(+). It carries out the reaction L-glutamine + H2O = L-glutamate + NH4(+). It functions in the pathway purine metabolism; IMP biosynthesis via de novo pathway; 5-amino-1-(5-phospho-D-ribosyl)imidazole from N(2)-formyl-N(1)-(5-phospho-D-ribosyl)glycinamide: step 1/2. Functionally, part of the phosphoribosylformylglycinamidine synthase complex involved in the purines biosynthetic pathway. Catalyzes the ATP-dependent conversion of formylglycinamide ribonucleotide (FGAR) and glutamine to yield formylglycinamidine ribonucleotide (FGAM) and glutamate. The FGAM synthase complex is composed of three subunits. PurQ produces an ammonia molecule by converting glutamine to glutamate. PurL transfers the ammonia molecule to FGAR to form FGAM in an ATP-dependent manner. PurS interacts with PurQ and PurL and is thought to assist in the transfer of the ammonia molecule from PurQ to PurL. The polypeptide is Phosphoribosylformylglycinamidine synthase subunit PurQ (Pelagibacter ubique (strain HTCC1062)).